A 278-amino-acid chain; its full sequence is MDRFLVKGAVGSLKRRMEQEQTGGGPAGLAEEEGNSKKNPRRAAPGNGVDSAGLTWGRIRAEGLNCDYTILFGKAEADEIFQELEKEVEYFTGALARVQVFGKWHSVPRKQATYGDTGLTYTFSGLTLSPKPWIPVLERVRDRVSLVTGQTFNFVLINRYKDGQDHIGEHRDDERELALGSPIASVSFGACRDFVFRHKDSRGKHPSRRLEVVRLQLAHGSLLMMNHPTNTHWYHSLPVRKKVLAPRVNLTFRKILPTTKRTTLLTASASVGSFALHS.

Residues 1–49 (MDRFLVKGAVGSLKRRMEQEQTGGGPAGLAEEEGNSKKNPRRAAPGNGV) form a disordered region. Residues 3–7 (RFLVK) carry the PCNA-binding motif. Substrate is bound by residues 101–103 (FGK) and 121–123 (YTF). Residues 151–256 (TFNFVLINRY…RVNLTFRKIL (106 aa)) form the Fe2OG dioxygenase domain. Residues asparagine 158, tyrosine 160, and histidine 170 each coordinate 2-oxoglutarate. Positions 170 and 172 each coordinate Fe cation. Substrate is bound at residue aspartate 173. 2-oxoglutarate contacts are provided by histidine 235, arginine 247, threonine 251, and arginine 253. Histidine 235 lines the Fe cation pocket.

The protein belongs to the alkB family. Interacts with PCNA homotrimer; this interaction is enhanced during the S-phase of the cell cycle. Interacts with nucleolar proteins NCL, UBTF and NPM1. Interacts with XRCC5-XRCC6 heterodimer. Fe(2+) serves as cofactor.

It is found in the nucleus. It localises to the nucleolus. Its subcellular location is the nucleoplasm. The enzyme catalyses a methylated nucleobase within DNA + 2-oxoglutarate + O2 = a nucleobase within DNA + formaldehyde + succinate + CO2. The catalysed reaction is an N(1)-methyl-2'-deoxyadenosine in double-stranded DNA + 2-oxoglutarate + O2 = a 2'-deoxyadenosine in double-stranded DNA + formaldehyde + succinate + CO2 + H(+). It catalyses the reaction an N(1)-methyl-2'-deoxyadenosine in single-stranded DNA + 2-oxoglutarate + O2 = a 2'-deoxyadenosine in single-stranded DNA + formaldehyde + succinate + CO2 + H(+). It carries out the reaction an N(3)-methyl-2'-deoxycytidine in double-stranded DNA + 2-oxoglutarate + O2 = a 2'-deoxycytidine in double-stranded DNA + formaldehyde + succinate + CO2 + H(+). The enzyme catalyses an N(3)-methyl-2'-deoxycytidine in single-stranded DNA + 2-oxoglutarate + O2 = a 2'-deoxycytidine in single-stranded DNA + formaldehyde + succinate + CO2 + H(+). The catalysed reaction is a 1,N(6)-etheno-2'-deoxyadenosine in double-stranded DNA + 2-oxoglutarate + O2 + H2O = a 2'-deoxyadenosine in double-stranded DNA + glyoxal + succinate + CO2. It catalyses the reaction a 1,N(6)-etheno-2'-deoxyadenosine in single-stranded DNA + 2-oxoglutarate + O2 + H2O = a 2'-deoxyadenosine in single-stranded DNA + glyoxal + succinate + CO2. It carries out the reaction a 3,N(4)-etheno-2'-deoxycytidine in double-stranded DNA + 2-oxoglutarate + O2 + H2O = a 2'-deoxycytidine in double-stranded DNA + glyoxal + succinate + CO2. The enzyme catalyses a 3,N(4)-etheno-2'-deoxycytidine in single-stranded DNA + 2-oxoglutarate + O2 + H2O = a 2'-deoxycytidine in single-stranded DNA + glyoxal + succinate + CO2. The catalysed reaction is a 1,N(2)-etheno-2'-deoxyguanosine in double-stranded DNA + 2-oxoglutarate + O2 + H2O = a 2'-deoxyguanosine in double-stranded DNA + glyoxal + succinate + CO2. Its activity is regulated as follows. Activated by ascorbate and magnesium ions. Functionally, dioxygenase that repairs alkylated nucleic acid bases by direct reversal oxidative dealkylation. Can process both double-stranded (ds) and single-stranded (ss) DNA substrates, with a strong preference for dsDNA. Uses molecular oxygen, 2-oxoglutarate and iron as cofactors to oxidize the alkyl groups that are subsequently released as aldehydes, regenerating the undamaged bases. Probes the base pair stability, locates a weakened base pair and flips the damaged base to accommodate the lesion in its active site for efficient catalysis. Repairs monoalkylated bases, specifically N1-methyladenine and N3-methylcytosine, as well as higher order alkyl adducts such as bases modified with exocyclic bridged adducts known as etheno adducts including 1,N6-ethenoadenine, 3,N4-ethenocytosine and 1,N2-ethenoguanine. Acts as a gatekeeper of genomic integrity under alkylation stress. Efficiently repairs alkylated lesions in ribosomal DNA (rDNA). These lesions can cause ss- and dsDNA strand breaks that severely impair rDNA transcription. In a response mechanism to DNA damage, associates with PCNA at replication forks to repair alkylated adducts prior to replication. The sequence is that of DNA oxidative demethylase ALKBH2 (ALKBH2) from Bos taurus (Bovine).